The following is a 339-amino-acid chain: ATPase GET3 (339 aa).

37–44 (KGGVGKTT) serves as a coordination point for ATP. The active site involves aspartate 66. Glutamate 237 and asparagine 264 together coordinate ATP. Zn(2+)-binding residues include cysteine 275 and cysteine 278.

Belongs to the arsA ATPase family. In terms of assembly, homodimer.

It is found in the cytoplasm. It localises to the endoplasmic reticulum. In terms of biological role, ATPase required for the post-translational delivery of tail-anchored (TA) proteins to the endoplasmic reticulum. Recognizes and selectively binds the transmembrane domain of TA proteins in the cytosol. This complex then targets to the endoplasmic reticulum by membrane-bound receptors, where the tail-anchored protein is released for insertion. This process is regulated by ATP binding and hydrolysis. ATP binding drives the homodimer towards the closed dimer state, facilitating recognition of newly synthesized TA membrane proteins. ATP hydrolysis is required for insertion. Subsequently, the homodimer reverts towards the open dimer state, lowering its affinity for the membrane-bound receptor, and returning it to the cytosol to initiate a new round of targeting. This is ATPase GET3 from Rhodotorula glutinis (Yeast).